Reading from the N-terminus, the 426-residue chain is UPF0597 protein CLI_1810 (426 aa).

This sequence belongs to the UPF0597 family.

The protein is UPF0597 protein CLI_1810 of Clostridium botulinum (strain Langeland / NCTC 10281 / Type F).